The chain runs to 251 residues: Osmotin-like protein (251 aa).

Positions 1–21 (MSHLTTFLVFFLLAFVTYTYA) are cleaved as a signal peptide. Intrachain disulfides connect Cys31/Cys226, Cys73/Cys83, Cys88/Cys94, Cys142/Cys214, Cys147/Cys197, Cys155/Cys165, Cys169/Cys178, and Cys179/Cys184. Asn233 carries N-linked (GlcNAc...) asparagine glycosylation.

Belongs to the thaumatin family.

The sequence is that of Osmotin-like protein (OLPA) from Nicotiana tabacum (Common tobacco).